The following is a 348-amino-acid chain: MFLQNAWYAVAWCDEVTDGIVTRKVLGRELALFRDGEGQPRAILNRCPHRFAPLSLGKRIGDAIQCPYHGLHFGPDGRCVHNPHGDGVVPDVATPTFPARERHKLIWAWMGDPALATDDIAGGEYGYLDDVELDLLPRGHLHLDCDYRLVIDNLMDPAHVAVLHDSALASEALIRAVPRVWREEDVIRVESWAPDSKPSFLFGAWLGNHDDPVDHWVASRWQAAGLLSVEGGVVAVGGDREDGLRVRGAHMITPETETSAHYFWAVVRNFREDDAEQSEQIRATTAAIFTGEDKWMLEAIERSMDGEEFWSLRPAILGTDRAAVMVRRALESEIKAEGRPKVVAVSAG.

A Rieske domain is found at 7–108 (WYAVAWCDEV…ARERHKLIWA (102 aa)). [2Fe-2S] cluster-binding residues include C47, H49, C66, and H69. 2 residues coordinate Fe cation: H159 and H164. Substrate is bound at residue H250. D293 contacts Fe cation.

As to quaternary structure, the chloroacetanilide N-alkylformylase multicomponent enzyme system is composed of an oxygenase component (CndA) and an electron transfer component formed by a ferredoxin reductase (CndC1) and a ferredoxin (CndB1). In vitro, chloroacetanilide N-alkylformylase assays in which CndB1 is substituted for CndB2 demonstrate that the two enzymes possess nearly identical activities. [2Fe-2S] cluster serves as cofactor.

The catalysed reaction is butachlor + 2 reduced [2Fe-2S]-[ferredoxin] + O2 + 2 H(+) = butyl formate + N-(2,6-diethylphenyl)-2-chloroacetamide + 2 oxidized [2Fe-2S]-[ferredoxin] + H2O. The enzyme catalyses alachlor + 2 reduced [2Fe-2S]-[ferredoxin] + O2 + 2 H(+) = methyl formate + N-(2,6-diethylphenyl)-2-chloroacetamide + 2 oxidized [2Fe-2S]-[ferredoxin] + H2O. It carries out the reaction acetochlor + 2 reduced [2Fe-2S]-[ferredoxin] + O2 + 2 H(+) = N-(2-ethyl-6-methylphenyl)-2-chloroacetamide + ethyl formate + 2 oxidized [2Fe-2S]-[ferredoxin] + H2O. Its activity is regulated as follows. Activity enhanced by Fe(2+) and Mg(2+) ions. Divalent cations such as Ca(2+), Cr(2+), Co(2+), and Mn(2+) show moderate inhibition of the enzyme, whereas heavy metal ions such as Ag(+), Cu(2+), Pb(2+), Hg(2+), Ni(2+) and Zn(2+) severely inhibit the activity. Component of the chloroacetanilide N-alkylformylase multicomponent enzyme system involved in the degradation of chloroacetanilide herbicides (N-alkoxyalkyl-N-chloroacetyl-substituted aniline derivatives). In vitro, catalyzes the N-dealkylation of butachlor, alachlor and acetochlor to yield 2-chloro-N-(2,6-diethylphenyl)acetamide (CDEPA) (for alachlor and butachlor) and 2-chloro-N-(2-methyl-6-ethylphenyl)acetamide (CMEPA) (for acetochlor). The protein is Chloroacetanilide N-alkylformylase, oxygenase component of Rhizorhabdus wittichii (strain DC-6 / KACC 16600) (Sphingomonas wittichii).